We begin with the raw amino-acid sequence, 262 residues long: Global transcriptional regulator CodY (262 aa).

Positions 1 to 159 (MAHLLEKTRK…ASTVVGIQLL (159 aa)) are GAF domain. Residues 207 to 226 (ASVIADRIGITRSVIVNALR) constitute a DNA-binding region (H-T-H motif).

This sequence belongs to the CodY family.

The protein resides in the cytoplasm. In terms of biological role, DNA-binding global transcriptional regulator which is involved in the adaptive response to starvation and acts by directly or indirectly controlling the expression of numerous genes in response to nutrient availability. During rapid exponential growth, CodY is highly active and represses genes whose products allow adaptation to nutrient depletion. This chain is Global transcriptional regulator CodY, found in Streptococcus pneumoniae (strain ATCC BAA-255 / R6).